Reading from the N-terminus, the 267-residue chain is Glutamate 5-kinase (267 aa).

Position 14 (lysine 14) interacts with ATP. Substrate-binding residues include serine 54, aspartate 141, and asparagine 157. Residues 177–178 (SD) and 219–225 (TGGMLSK) contribute to the ATP site.

It belongs to the glutamate 5-kinase family.

Its subcellular location is the cytoplasm. It carries out the reaction L-glutamate + ATP = L-glutamyl 5-phosphate + ADP. The protein operates within amino-acid biosynthesis; L-proline biosynthesis; L-glutamate 5-semialdehyde from L-glutamate: step 1/2. Its function is as follows. Catalyzes the transfer of a phosphate group to glutamate to form L-glutamate 5-phosphate. The protein is Glutamate 5-kinase of Streptococcus agalactiae serotype Ia (strain ATCC 27591 / A909 / CDC SS700).